Here is a 571-residue protein sequence, read N- to C-terminus: Phosphomethylpyrimidine synthase (571 aa).

Substrate contacts are provided by residues N201, M230, Y259, H295, 315–317 (SRG), 356–359 (DALR), and E395. H399 provides a ligand contact to Zn(2+). Residue Y422 participates in substrate binding. H463 is a binding site for Zn(2+). 3 residues coordinate [4Fe-4S] cluster: C545, C548, and C553.

The protein belongs to the ThiC family. [4Fe-4S] cluster is required as a cofactor.

The enzyme catalyses 5-amino-1-(5-phospho-beta-D-ribosyl)imidazole + S-adenosyl-L-methionine = 4-amino-2-methyl-5-(phosphooxymethyl)pyrimidine + CO + 5'-deoxyadenosine + formate + L-methionine + 3 H(+). It participates in cofactor biosynthesis; thiamine diphosphate biosynthesis. Its function is as follows. Catalyzes the synthesis of the hydroxymethylpyrimidine phosphate (HMP-P) moiety of thiamine from aminoimidazole ribotide (AIR) in a radical S-adenosyl-L-methionine (SAM)-dependent reaction. The chain is Phosphomethylpyrimidine synthase from Chlorobium phaeovibrioides (strain DSM 265 / 1930) (Prosthecochloris vibrioformis (strain DSM 265)).